We begin with the raw amino-acid sequence, 385 residues long: 8-amino-7-oxononanoate synthase (385 aa).

Arg-21 is a substrate binding site. 108-109 (GF) provides a ligand contact to pyridoxal 5'-phosphate. Residue His-133 participates in substrate binding. Residues Ser-179, His-207, and Thr-233 each coordinate pyridoxal 5'-phosphate. Position 236 is an N6-(pyridoxal phosphate)lysine (Lys-236). Thr-352 provides a ligand contact to substrate.

This sequence belongs to the class-II pyridoxal-phosphate-dependent aminotransferase family. BioF subfamily. In terms of assembly, homodimer. The cofactor is pyridoxal 5'-phosphate.

It carries out the reaction 6-carboxyhexanoyl-[ACP] + L-alanine + H(+) = (8S)-8-amino-7-oxononanoate + holo-[ACP] + CO2. It participates in cofactor biosynthesis; biotin biosynthesis. In terms of biological role, catalyzes the decarboxylative condensation of pimeloyl-[acyl-carrier protein] and L-alanine to produce 8-amino-7-oxononanoate (AON), [acyl-carrier protein], and carbon dioxide. This chain is 8-amino-7-oxononanoate synthase, found in Salmonella schwarzengrund (strain CVM19633).